The following is a 428-amino-acid chain: Serine--tRNA ligase (428 aa).

235-237 is an L-serine binding site; the sequence is TAE. 266–268 is a binding site for ATP; the sequence is RSE. Glu289 serves as a coordination point for L-serine. 353–356 is a binding site for ATP; sequence EISS. An L-serine-binding site is contributed by Ser389.

This sequence belongs to the class-II aminoacyl-tRNA synthetase family. Type-1 seryl-tRNA synthetase subfamily. Homodimer. The tRNA molecule binds across the dimer.

The protein resides in the cytoplasm. It catalyses the reaction tRNA(Ser) + L-serine + ATP = L-seryl-tRNA(Ser) + AMP + diphosphate + H(+). It carries out the reaction tRNA(Sec) + L-serine + ATP = L-seryl-tRNA(Sec) + AMP + diphosphate + H(+). The protein operates within aminoacyl-tRNA biosynthesis; selenocysteinyl-tRNA(Sec) biosynthesis; L-seryl-tRNA(Sec) from L-serine and tRNA(Sec): step 1/1. In terms of biological role, catalyzes the attachment of serine to tRNA(Ser). Is also able to aminoacylate tRNA(Sec) with serine, to form the misacylated tRNA L-seryl-tRNA(Sec), which will be further converted into selenocysteinyl-tRNA(Sec). The sequence is that of Serine--tRNA ligase from Shewanella baltica (strain OS155 / ATCC BAA-1091).